The primary structure comprises 85 residues: MEGLSITKLLVVGILIVLLFGTSKLRTLGADLGAALKGFKKAMRNDDEVSTSVLGETKMSAETKTVAETKAASDSQAAASVERKD.

Residues 1 to 21 (MEGLSITKLLVVGILIVLLFG) form a helical membrane-spanning segment. The interval 64–85 (KTVAETKAASDSQAAASVERKD) is disordered.

This sequence belongs to the TatA/E family. TatE subfamily.

It localises to the cell inner membrane. Its function is as follows. Part of the twin-arginine translocation (Tat) system that transports large folded proteins containing a characteristic twin-arginine motif in their signal peptide across membranes. TatE shares overlapping functions with TatA. The protein is Probable Sec-independent protein translocase protein TatE of Yersinia pestis.